The primary structure comprises 64 residues: Beta-defensin 13 (64 aa).

A signal peptide spans 1 to 22 (MRIFSLIVAGLVLLIQLYPAWG). 3 cysteine pairs are disulfide-bonded: Cys30-Cys57, Cys37-Cys51, and Cys41-Cys58.

This sequence belongs to the beta-defensin family. As to expression, expressed in testis and to a lesser extent in epididymis (caput, corpus and cauda). Also weakly expressed in kidneys.

It localises to the secreted. Functionally, has antibacterial activity. This Mus musculus (Mouse) protein is Beta-defensin 13 (Defb13).